We begin with the raw amino-acid sequence, 402 residues long: Multidrug resistance protein MdtH (402 aa).

11 consecutive transmembrane segments (helical) span residues 13–33, 45–65, 99–116, 139–159, 165–185, 214–234, 244–264, 277–297, 300–322, 340–360, and 368–388; these read YFLL…FPLI, ALMV…LGIF, PWLL…GTLF, LLMM…SWLL, LVCA…AWLL, VLTL…LPIM, AVKW…YPIA, LMAG…VGNL, LFTL…ETLS, LGLA…FDMG, and LPWM…GWQF.

This sequence belongs to the major facilitator superfamily. DHA1 family. MdtH (TC 2.A.1.2.21) subfamily.

It localises to the cell inner membrane. This Citrobacter koseri (strain ATCC BAA-895 / CDC 4225-83 / SGSC4696) protein is Multidrug resistance protein MdtH.